The chain runs to 507 residues: ATP synthase subunit alpha, chloroplastic (507 aa).

Glycine 170–threonine 177 lines the ATP pocket.

The protein belongs to the ATPase alpha/beta chains family. In terms of assembly, F-type ATPases have 2 components, CF(1) - the catalytic core - and CF(0) - the membrane proton channel. CF(1) has five subunits: alpha(3), beta(3), gamma(1), delta(1), epsilon(1). CF(0) has four main subunits: a, b, b' and c.

Its subcellular location is the plastid. The protein localises to the chloroplast thylakoid membrane. The enzyme catalyses ATP + H2O + 4 H(+)(in) = ADP + phosphate + 5 H(+)(out). Produces ATP from ADP in the presence of a proton gradient across the membrane. The alpha chain is a regulatory subunit. This is ATP synthase subunit alpha, chloroplastic from Drimys granadensis.